Here is a 107-residue protein sequence, read N- to C-terminus: uncharacterized protein (107 aa).

It is found in the mitochondrion. This is an uncharacterized protein from Arabidopsis thaliana (Mouse-ear cress).